A 734-amino-acid polypeptide reads, in one-letter code: Myb-like protein J (734 aa).

Disordered stretches follow at residues 1 to 35, 128 to 196, and 221 to 378; these read MPNNQQNQIESPSKNTSNVGGSTLLNNNSPPFKSN, QKDQ…PTMM, and SPIS…LKQG. Residues 131 to 142 show a composition bias toward basic and acidic residues; that stretch reads QQQKEQQKEQQK. Residues 164–173 are compositionally biased toward low complexity; it reads TTTTTTTTTT. A compositionally biased stretch (polar residues) spans 174–196; the sequence is AVEQQGAEQQDTNLNSTSSPTMM. Low complexity predominate over residues 221-230; it reads SPISSSLNNS. Positions 231 to 257 are enriched in polar residues; the sequence is QDNTKPVSPDNIENTSNPMDTSSSNGK. Low complexity predominate over residues 258 to 372; the sequence is TPTITPIVTP…GGKTNPTGKK (115 aa). Residues 371–426 form the HTH myb-type domain; it reads KKTSLKQGWTKEEHIRFLNGIQIHGKGAWKEIAQFVGTRTPTQIQSHAQKYYLRQK. Residues 399-422 constitute a DNA-binding region (H-T-H motif); it reads WKEIAQFVGTRTPTQIQSHAQKYY. Residues 445–454 show a composition bias toward low complexity; sequence DDNLNNSNKN. A disordered region spans residues 445–623; that stretch reads DDNLNNSNKN…GNILRHQNSH (179 aa). Over residues 455 to 468 the composition is skewed to basic and acidic residues; sequence NVDKNKQDDKEKKT. Positions 469–478 are enriched in basic residues; the sequence is QKTKKTKSKS. 2 stretches are compositionally biased toward low complexity: residues 489 to 543 and 574 to 615; these read QQQQ…SSQT and NNNN…NEGN.

The protein resides in the nucleus. The protein is Myb-like protein J (mybJ) of Dictyostelium discoideum (Social amoeba).